The primary structure comprises 299 residues: Ficolin-3 (299 aa).

Residues M1–T23 form the signal peptide. The interval P44–V81 is disordered. Residues G48 to P80 form the Collagen-like domain. 6 positions are modified to hydroxyproline: P50, P53, P59, P65, P68, and P77. A compositionally biased stretch (pro residues) spans P61–K70. The Fibrinogen C-terminal domain occupies L84–R299. 2 disulfide bridges follow: C86–C110 and C93–C121. N-linked (GlcNAc...) (complex) asparagine glycosylation is present at N189. Residues D237, D239, S241, and S243 each contribute to the Ca(2+) site. A disulfide bond links C245 and C258. C258 to Y259 contributes to the a carbohydrate binding site.

It belongs to the ficolin lectin family. Homotrimer. May form an octadecamer consisting of an elementary trimer unit. Does not interact with fibronectin, elastin or zymosan. Interacts with MASP1 and MASP2. Post-translationally, the N-terminus is blocked. Liver and lung. In liver it is produced by bile duct epithelial cells and hepatocytes. In lung it is produced by both ciliated bronchial epithelial cells and type II alveolar epithelial cells.

It localises to the secreted. Its function is as follows. May function in innate immunity through activation of the lectin complement pathway. Calcium-dependent and GlcNAc-binding lectin. Has affinity with GalNAc, GlcNAc, D-fucose, as mono/oligosaccharide and lipopolysaccharides from S.typhimurium and S.minnesota. In Homo sapiens (Human), this protein is Ficolin-3 (FCN3).